A 301-amino-acid chain; its full sequence is Probable 5-dehydro-4-deoxyglucarate dehydratase (301 aa).

The protein belongs to the DapA family.

The enzyme catalyses 5-dehydro-4-deoxy-D-glucarate + H(+) = 2,5-dioxopentanoate + CO2 + H2O. Its pathway is carbohydrate acid metabolism; D-glucarate degradation; 2,5-dioxopentanoate from D-glucarate: step 2/2. This is Probable 5-dehydro-4-deoxyglucarate dehydratase from Rhizobium meliloti (strain 1021) (Ensifer meliloti).